The following is a 202-amino-acid chain: Phosphoenolpyruvate guanylyltransferase (202 aa).

Residues T140, G156, and S159 each coordinate phosphoenolpyruvate.

The protein belongs to the CofC family.

It carries out the reaction phosphoenolpyruvate + GTP + H(+) = enolpyruvoyl-2-diphospho-5'-guanosine + diphosphate. Its pathway is cofactor biosynthesis; coenzyme F420 biosynthesis. Guanylyltransferase that catalyzes the activation of phosphoenolpyruvate (PEP) as enolpyruvoyl-2-diphospho-5'-guanosine, via the condensation of PEP with GTP. It is involved in the biosynthesis of coenzyme F420, a hydride carrier cofactor. The chain is Phosphoenolpyruvate guanylyltransferase from Chloroflexus aggregans (strain MD-66 / DSM 9485).